We begin with the raw amino-acid sequence, 1152 residues long: DNA-directed RNA polymerase subunit beta (1152 aa).

This sequence belongs to the RNA polymerase beta chain family. The RNAP catalytic core consists of 2 alpha, 1 beta, 1 beta' and 1 omega subunit. When a sigma factor is associated with the core the holoenzyme is formed, which can initiate transcription.

The enzyme catalyses RNA(n) + a ribonucleoside 5'-triphosphate = RNA(n+1) + diphosphate. In terms of biological role, DNA-dependent RNA polymerase catalyzes the transcription of DNA into RNA using the four ribonucleoside triphosphates as substrates. In Deinococcus geothermalis (strain DSM 11300 / CIP 105573 / AG-3a), this protein is DNA-directed RNA polymerase subunit beta.